We begin with the raw amino-acid sequence, 280 residues long: Acyl-[acyl-carrier-protein]--UDP-N-acetylglucosamine O-acyltransferase (280 aa).

The protein belongs to the transferase hexapeptide repeat family. LpxA subfamily. Homotrimer.

It is found in the cytoplasm. The enzyme catalyses a (3R)-hydroxyacyl-[ACP] + UDP-N-acetyl-alpha-D-glucosamine = a UDP-3-O-[(3R)-3-hydroxyacyl]-N-acetyl-alpha-D-glucosamine + holo-[ACP]. It participates in glycolipid biosynthesis; lipid IV(A) biosynthesis; lipid IV(A) from (3R)-3-hydroxytetradecanoyl-[acyl-carrier-protein] and UDP-N-acetyl-alpha-D-glucosamine: step 1/6. In terms of biological role, involved in the biosynthesis of lipid A, a phosphorylated glycolipid that anchors the lipopolysaccharide to the outer membrane of the cell. This chain is Acyl-[acyl-carrier-protein]--UDP-N-acetylglucosamine O-acyltransferase, found in Chlamydia trachomatis serovar A (strain ATCC VR-571B / DSM 19440 / HAR-13).